Consider the following 256-residue polypeptide: 5'-nucleotidase SurE (256 aa).

4 residues coordinate a divalent metal cation: D8, D9, S39, and N95.

The protein belongs to the SurE nucleotidase family. A divalent metal cation is required as a cofactor.

The protein resides in the cytoplasm. The enzyme catalyses a ribonucleoside 5'-phosphate + H2O = a ribonucleoside + phosphate. In terms of biological role, nucleotidase that shows phosphatase activity on nucleoside 5'-monophosphates. The sequence is that of 5'-nucleotidase SurE from Methanosphaera stadtmanae (strain ATCC 43021 / DSM 3091 / JCM 11832 / MCB-3).